Reading from the N-terminus, the 620-residue chain is Tyrosine-protein kinase ITK/TSK (620 aa).

One can recognise a PH domain in the interval 4 to 111 (FILLEEQLIK…WVLALKEETR (108 aa)). The segment at 113–149 (NNSLVPKYHPNFWMDGKWRCCSQLEKLATGCAQYDPT) adopts a Btk-type zinc-finger fold. Zn(2+) contacts are provided by His121, Cys132, Cys133, and Cys143. The region spanning 171–231 (PEETVVIALY…PSSYLVEKSP (61 aa)) is the SH3 domain. Tyr180 bears the Phosphotyrosine; by autocatalysis mark. In terms of domain architecture, SH2 spans 239-338 (WYNKSISRDK…GLVTRLRYPV (100 aa)). The 253-residue stretch at 363-615 (LTFVQEIGSG…SRLLRQLAEI (253 aa)) folds into the Protein kinase domain. Residues 369-377 (IGSGQFGLV) and Lys391 each bind ATP. Asp482 serves as the catalytic Proton acceptor. Phosphotyrosine; by LCK is present on Tyr512. Ser565 is modified (phosphoserine).

The protein belongs to the protein kinase superfamily. Tyr protein kinase family. TEC subfamily. As to quaternary structure, homooligomerizes; this association negatively regulates kinase activity. Interacts with PPIA/CYPA; this interaction regulates TCR signal strength via a proline-directed conformational switch in ITK. Interacts with THEMIS. Interacts with FASLG. Interacts with VAV1; this interaction is important for VAV1 localization and TCR-induced actin polarization. Interacts with TBX21. It depends on Zn(2+) as a cofactor. Phosphorylated at Tyr-512 in the activation loop of the kinase domain by LCK. Subsequent autophosphorylation at Tyr-180 leads to the kinase activation. The autophosphorylated Tyr-180 lies within the substrate binding sequence of the SH3 domain. Post-translationally, ubiquitinated. T-cell lines and natural killer cell lines.

Its subcellular location is the cytoplasm. The protein localises to the nucleus. The catalysed reaction is L-tyrosyl-[protein] + ATP = O-phospho-L-tyrosyl-[protein] + ADP + H(+). Tyrosine kinase that plays an essential role in regulation of the adaptive immune response. Regulates the development, function and differentiation of conventional T-cells and nonconventional NKT-cells. When antigen presenting cells (APC) activate T-cell receptor (TCR), a series of phosphorylation lead to the recruitment of ITK to the cell membrane, in the vicinity of the stimulated TCR receptor, where it is phosphorylated by LCK. Phosphorylation leads to ITK autophosphorylation and full activation. Once activated, phosphorylates PLCG1, leading to the activation of this lipase and subsequent cleavage of its substrates. In turn, the endoplasmic reticulum releases calcium in the cytoplasm and the nuclear activator of activated T-cells (NFAT) translocates into the nucleus to perform its transcriptional duty. Phosphorylates 2 essential adapter proteins: the linker for activation of T-cells/LAT protein and LCP2. Then, a large number of signaling molecules such as VAV1 are recruited and ultimately lead to lymphokine production, T-cell proliferation and differentiation. Required for TCR-mediated calcium response in gamma-delta T-cells, may also be involved in the modulation of the transcriptomic signature in the Vgamma2-positive subset of immature gamma-delta T-cells. Phosphorylates TBX21 at 'Tyr-530' and mediates its interaction with GATA3. The sequence is that of Tyrosine-protein kinase ITK/TSK (ITK) from Homo sapiens (Human).